The sequence spans 319 residues: CCAAT/enhancer-binding protein homolog 1 (319 aa).

The interval 53–67 (SLTIAASLQQRDRER) is n' domain; required for axon regeneration. The segment at 163 to 319 (TRRAVKRPVP…QRHILENFNK (157 aa)) is disordered. Residues 171–181 (VPYDDYQKEYS) are compositionally biased toward basic and acidic residues. The span at 182–198 (EESSDMTDNDGSVDDSY) shows a compositional bias: acidic residues. Basic and acidic residues-rich tracts occupy residues 225–248 (LKAD…DAVR), 255–274 (KELQ…RIAE), 281–291 (SERDARRRDQD), and 302–319 (PMKE…NFNK). A bZIP domain is found at 233–308 (EPTYKLKRAR…NKGPMKEQRM (76 aa)). The segment at 237–271 (KLKRARNNDAVRKSRKKAKELQDKKEAEHDKMKRR) is basic motif. Residues 275-308 (LEGLLQSERDARRRDQDTLEQLLRNKGPMKEQRM) form a leucine-zipper region.

The protein belongs to the bZIP family. C/EBP subfamily. May interact with transcription factor ets-4. May interact (via N-terminus) with nipi-3. May interact (via N-terminus) with importin subunit alpha ima-3. In terms of tissue distribution, expressed in touch and motor neurons.

Its subcellular location is the synapse. The protein resides in the cytoplasm. It is found in the nucleus. It localises to the cell projection. The protein localises to the axon. Functionally, transcription factor. Binds to promoter regions of target genes, perhaps at the motif 5'-[AGCT]TT[AGT][TC]GAAA[ACT]-3'. Modulates expression of genes involved in development and in stress responses, including those regulating the p38/MAPK signaling pathways such as MAPKK sek-1 and phosphatase vhp-1. Involved in innate immunity. Plays a role in repressing the response to infection by the Gram-negative bacterium P.aeruginosa, perhaps acting independently of the pmk-1 or pmk-3 p38/MAPK pathways. However, also plays a protective role in the response to infection by P.aeruginosa. Required in axonal regrowth following injury and synaptogenesis. Following axon injury, in concert with transcription factor ets-4, activates expression of receptor tyrosine kinase svh-2. May function downstream of the Ca2+-activated p38/MAPK pathway to promote axon regeneration. Plays a role in modulating polymerization of neuronal microtubules. Involved in modulating lipid homeostasis. The chain is CCAAT/enhancer-binding protein homolog 1 from Caenorhabditis elegans.